The sequence spans 242 residues: UPF0246 protein SSA_1395 (242 aa).

It belongs to the UPF0246 family.

The chain is UPF0246 protein SSA_1395 from Streptococcus sanguinis (strain SK36).